Reading from the N-terminus, the 934-residue chain is Desmocollin 2-like protein (934 aa).

Cadherin domains follow at residues R167 to F274, F274 to F381, K382 to F494, and N495 to I600. At R167 to G716 the chain is on the extracellular side. Residues N197, N296, and N316 are each glycosylated (N-linked (GlcNAc...) asparagine). 3 N-linked (GlcNAc...) asparagine glycosylation sites follow: N509, N565, and N569. Residues I717 to F737 form a helical membrane-spanning segment. Topologically, residues C738–K934 are cytoplasmic.

In terms of tissue distribution, expressed at low levels in the brain and heart.

The protein resides in the cell junction. Its subcellular location is the desmosome. It is found in the cell membrane. Its function is as follows. A component of desmosome cell-cell junctions which are required for positive regulation of cellular adhesion. Involved in the interaction of plaque proteins and intermediate filaments mediating cell-cell adhesion. Involved in the formation and structural organization of desmosome cell-cell junctions during embryonic development. Required for embryogenesis, specifically for progression of epiboly and normal convergence-extension movements during gastrulation. Required for the development of desmosomal-rich midlines in the heart. Plays an important role in ventricular contraction and resulting heart stroke volume. This Danio rerio (Zebrafish) protein is Desmocollin 2-like protein.